The following is a 120-amino-acid chain: ATP-dependent Clp protease adapter protein ClpS (120 aa).

Belongs to the ClpS family. As to quaternary structure, binds to the N-terminal domain of the chaperone ClpA.

Its function is as follows. Involved in the modulation of the specificity of the ClpAP-mediated ATP-dependent protein degradation. The polypeptide is ATP-dependent Clp protease adapter protein ClpS (Azotobacter vinelandii (strain DJ / ATCC BAA-1303)).